The sequence spans 198 residues: Ribonuclease HII (198 aa).

The RNase H type-2 domain occupies 10–198; the sequence is HLVAGVDEVG…PVKRALGLVS (189 aa). Residues D16, E17, and D108 each coordinate a divalent metal cation.

The protein belongs to the RNase HII family. Requires Mn(2+) as cofactor. The cofactor is Mg(2+).

It is found in the cytoplasm. It catalyses the reaction Endonucleolytic cleavage to 5'-phosphomonoester.. Endonuclease that specifically degrades the RNA of RNA-DNA hybrids. The protein is Ribonuclease HII of Salmonella paratyphi A (strain AKU_12601).